We begin with the raw amino-acid sequence, 790 residues long: Nuclear cap-binding protein subunit 1 (790 aa).

The disordered stretch occupies residues 1 to 26; the sequence is MSRRRHSDENDGGQPHKRRKTSDANE. Positions 3 to 20 match the Nuclear localization signal motif; that stretch reads RRRHSDENDGGQPHKRRK. Residue S7 is modified to Phosphoserine; by RPS6KB1. T21 bears the Phosphothreonine; by RPS6KB1 mark. Position 22 is a phosphoserine; by RPS6KB1 (S22). Positions 28-240 constitute an MIF4G domain; the sequence is EDHLESLICK…CLWAQIQKLK (213 aa). S201 is subject to Phosphoserine. N6-acetyllysine is present on K204. The stretch at 643-713 forms a coiled coil; that stretch reads STIRKMNKHV…SEQKNLFLVI (71 aa). Residue K684 forms a Glycyl lysine isopeptide (Lys-Gly) (interchain with G-Cter in SUMO2) linkage. K698 bears the N6-acetyllysine mark.

This sequence belongs to the NCBP1 family. Component of the nuclear cap-binding complex (CBC), a heterodimer composed of NCBP1/CBP80 and NCBP2/CBP20 that interacts with m7GpppG-capped RNA. Found in a U snRNA export complex containing PHAX/RNUXA, NCBP1/CBP80, NCBP2/CBP20, RAN, XPO1 and m7G-capped RNA. Identified in a IGF2BP1-dependent mRNP granule complex containing untranslated mRNAs. Interacts with PHAX/RNUXA, SRRT/ARS2, EIF4G2, IGF2BP1, HNRNPF, HNRNPH1, KIAA0427/CTIF, PARN, DROSHA, UPF1 and ALYREF/THOC4. May interact with EIF4G1; the interaction is however controversial since it is reported by PubMed:11340157, PubMed:15059963 and PubMed:15361857, but is not observed by PubMed:19648179. The large PER complex involved in the repression of transcriptional termination is composed of at least PER2, CDK9, DDX5, DHX9, NCBP1/CBP80 and POLR2A. Component of an alternative nuclear cap-binding complex (CBC) composed of NCBP1/CBP80 and NCBP3. Interacts with METTL3. Interacts with ZFC3H1 in a RNase-insensitive manner. Interacts with MTREX. Interacts with TASOR. Interacts with DHX34; the interaction is RNA-dependent. Interacts with KPNA3. Post-translationally, dephosphorylated at Thr-21 by the PNUTS-PP1 complex during RNA polymerase II transcription pause-release.

It is found in the nucleus. It localises to the cytoplasm. Component of the cap-binding complex (CBC), which binds cotranscriptionally to the 5'-cap of pre-mRNAs and is involved in various processes such as pre-mRNA splicing, translation regulation, nonsense-mediated mRNA decay, RNA-mediated gene silencing (RNAi) by microRNAs (miRNAs) and mRNA export. The CBC complex is involved in mRNA export from the nucleus via its interaction with ALYREF/THOC4/ALY, leading to the recruitment of the mRNA export machinery to the 5'-end of mRNA and to mRNA export in a 5' to 3' direction through the nuclear pore. The CBC complex is also involved in mediating U snRNA and intronless mRNAs export from the nucleus. The CBC complex is essential for a pioneer round of mRNA translation, before steady state translation when the CBC complex is replaced by cytoplasmic cap-binding protein eIF4E. The pioneer round of mRNA translation mediated by the CBC complex plays a central role in nonsense-mediated mRNA decay (NMD), NMD only taking place in mRNAs bound to the CBC complex, but not on eIF4E-bound mRNAs. The CBC complex enhances NMD in mRNAs containing at least one exon-junction complex (EJC) via its interaction with UPF1, promoting the interaction between UPF1 and UPF2. The CBC complex is also involved in 'failsafe' NMD, which is independent of the EJC complex, while it does not participate in Staufen-mediated mRNA decay (SMD). During cell proliferation, the CBC complex is also involved in microRNAs (miRNAs) biogenesis via its interaction with SRRT/ARS2 and is required for miRNA-mediated RNA interference. The CBC complex also acts as a negative regulator of PARN, thereby acting as an inhibitor of mRNA deadenylation. In the CBC complex, NCBP1/CBP80 does not bind directly capped RNAs (m7GpppG-capped RNA) but is required to stabilize the movement of the N-terminal loop of NCBP2/CBP20 and lock the CBC into a high affinity cap-binding state with the cap structure. Associates with NCBP3 to form an alternative cap-binding complex (CBC) which plays a key role in mRNA export and is particularly important in cellular stress situations such as virus infections. The conventional CBC with NCBP2 binds both small nuclear RNA (snRNA) and messenger (mRNA) and is involved in their export from the nucleus whereas the alternative CBC with NCBP3 does not bind snRNA and associates only with mRNA thereby playing a role only in mRNA export. NCBP1/CBP80 is required for cell growth and viability. This is Nuclear cap-binding protein subunit 1 (NCBP1) from Homo sapiens (Human).